The primary structure comprises 242 residues: Peptidyl-prolyl cis-trans isomerase FKBP20-2, chloroplastic (242 aa).

A chloroplast-targeting transit peptide spans methionine 1–cysteine 31. The N-terminal 36 residues, cysteine 32–alanine 67, are a transit peptide targeting the thylakoid. Positions glycine 138–glutamine 225 constitute a PPIase FKBP-type domain. Cysteine 227 and cysteine 241 are disulfide-bonded.

The protein belongs to the FKBP-type PPIase family. Interacts in vitro with LTO1.

It localises to the plastid. It is found in the chloroplast thylakoid lumen. The catalysed reaction is [protein]-peptidylproline (omega=180) = [protein]-peptidylproline (omega=0). PPIases accelerate the folding of proteins. It catalyzes the cis-trans isomerization of proline imidic peptide bonds in oligopeptides. Involved in the accumulation of the PSII complex. In Arabidopsis thaliana (Mouse-ear cress), this protein is Peptidyl-prolyl cis-trans isomerase FKBP20-2, chloroplastic.